The sequence spans 243 residues: Terpene cyclase dpmpB (243 aa).

Helical transmembrane passes span 13–33 (FLEV…GWTA), 51–71 (ALMP…ILPF), 78–98 (WVHV…IKFA), 112–132 (LTWI…ALAA), 141–161 (AWSA…QLLC), 169–189 (SYLL…QDIL), and 207–227 (LWFV…LWYV).

The protein belongs to the paxB family.

It localises to the membrane. Its pathway is secondary metabolite biosynthesis; terpenoid biosynthesis. Terpene cyclase; part of the gene cluster that mediates the biosynthesis of diterpenoid pyrones. The first step of the pathway is the synthesis of the alpha-pyrone moiety by the polyketide synthase dpmpA via condensation of one acetyl-CoA starter unit with 3 malonyl-CoA units and 2 methylations. The alpha-pyrone is then combined with geranylgeranyl pyrophosphate (GGPP) formed by the GGPP synthase dpmpD through the action of the prenyltransferase dpmpC to yield a linear alpha-pyrone diterpenoid. Subsequent steps in the diterpenoid pyrone biosynthetic pathway involve the decalin core formation, which is initiated by the epoxidation of the C10-C11 olefin by the FAD-dependent oxidoreductase dpmpE, and is followed by a cyclization cascade catalyzed by the terpene cyclase dpmpB. The short chain dehydrogenase/reductase dpmpG then oxidizes the 8S hydroxy group to a ketone and the short chain dehydrogenase/reductase dpmpH reduces the ketone to the 8R hydroxy group to yield higginsianin B. Higginsianin B is further methylated by the methyltransferase dpmpI to produce the intermediate named FDDP B. The cytochrome P450 monooxygenase dpmpJ then oxidizes the C-26 methyl to primary alcohol, producing the final diterpenoid pyrone with a C-26 primary alcohol on the gamma-pyrone moiety named FDDP C. The protein is Terpene cyclase dpmpB of Macrophomina phaseolina (strain MS6) (Charcoal rot fungus).